The primary structure comprises 1978 residues: Centrosomal protein Cep290 (1978 aa).

Residues 1–650 (MSMDIPETVS…SLCEVPEIAE (650 aa)) form a necessary and sufficient for function in ciliogenesis, transition zone (TZ) assembly, and recruitment of DZP1 and Mks1 to the TZ. Also required for subcellular localization to the cilium basal body region. Coiled coils occupy residues 76–384 (DRRL…KSQQ) and 471–505 (IERLTLKLRTSEELRLQLKLEKSELRRKLLELQQD). A disordered region spans residues 271 to 296 (QLEGKSISSGQTNSSNSQSQQEEEHA). Residues 276-290 (SISSGQTNSSNSQSQ) are compositionally biased toward low complexity. The interval 663-688 (ATRPSSPTEATMGLRRPTVPDPEEKP) is disordered. 3 coiled-coil regions span residues 853–887 (FEEQQQELLTWRSKQAELQRETKQLEGLLHVANEQ), 922–970 (LAKV…TQQD), and 1192–1233 (ADAV…SRSE). The span at 1313 to 1324 (KEKLRQKPEVPV) shows a compositional bias: basic and acidic residues. The segment at 1313–1397 (KEKLRQKPEV…EKQDTEELKE (85 aa)) is disordered. Residues 1329-1341 (STDSRSSSSSDSS) are compositionally biased toward low complexity. Positions 1379 to 1391 (VTEEPEGEEEKQD) are enriched in acidic residues. 2 coiled-coil regions span residues 1405–1439 (IKDLKDKLEYSERSLKTREEEVDILKEKLKLCQER) and 1501–1654 (LNRT…LESK). Disordered regions lie at residues 1684 to 1714 (VGVSKFAPSPSESPETYTGPSSECSSPAHHH) and 1859 to 1884 (LKDGRRSTESRSSMDSTPAEAARLQQ). Residues 1693–1708 (PSESPETYTGPSSECS) are compositionally biased toward polar residues. The stretch at 1726–1935 (IEALKSRIEL…KEQLVKKTQL (210 aa)) forms a coiled coil.

Interacts (via N-terminus) with DZIP1. Expressed in sensory neurons type I and in germ cells (at protein level).

The protein localises to the cytoplasm. The protein resides in the cytoskeleton. It localises to the cilium basal body. Its subcellular location is the microtubule organizing center. It is found in the centrosome. The protein localises to the centriole. Functionally, essential for ciliogenesis in sensory neurons and spermatocytes. During neuron and spermatocyte ciliogenesis, essential for initiating transition zone (TZ) assembly and is required for the formation of diverse connections between microtubules and between microtubules and the membrane. Regulates TZ assembly by recruiting DZIP1 to the plasma membrane where it promotes early ciliary membrane formation resulting in the initiation of TZ assembly. This chain is Centrosomal protein Cep290, found in Drosophila melanogaster (Fruit fly).